A 2271-amino-acid chain; its full sequence is MSKRQKAFHDSLANEKTRVRLYKSGKNWVKSGIKEIEMFKIMGLPFISHSLVSQDNQSISKKMTGYGLKTTAVIGGAFTVNMLHDQQAFAASDAPLTSELNTQSETVGNQNSTTIEASTSTADSTSVTKNSSSVQTSNSDTVSSEKSEKVTSTTNSTSNQQEKLTSTSESTSSKNTTSSSDTKSVASTSSTEQPINTSTNQSTASNNTSQSTTPSSVNLNKTSTTSTSTAPVKLRTFSRLAMSTFASAATTTAVTANTITVNKDNLKQYMTTSGNATYDQSTGIVTLTQDAYSQKGAITLGTRIDSNKSFHFSGKVNLGNKYEGHGNGGDGIGFAFSPGVLGETGLNGAAVGIGGLSNAFGFKLDTYHNTSKPNSAAKANADPSNVAGGGAFGAFVTTDSYGVATTYTSSSTADNAAKLNVQPTNNTFQDFDINYNGDTKVMTVKYAGQTWTRNISDWIAKSGTTNFSLSMTASTGGATNLQQVQFGTFEYTESAVTQVRYVDVTTGKDIIPPKTYSGNVDQVVTIDNQQSALTAKGYNYTSVDSSYASTYNDTNKTVKMTNAGQSVTYYFTDVKAPTVTVGNQTIEVGKTMNPIVLTTTDNGTGTVTNTVTGLPSGLSYDSATNSIIGTPTKIGQSTVTVVSTDQANNKSTTTFTINVVDTTAPTVTPIGDQSSEVYSPISPIKIATQDNSGNAVTNTVTGLPSGLTFDSTNNTISGTPTNIGTSTISIVSTDASGNKTTTTFKYEVTRNSMSDSVSTSGSTQQSQSVSTSKADSQSASTSTSGSIVVSTSASTSKSTSVSLSDSVSASKSLSTSESNSVSSSTSTSLVNSQSVSSSMSDSASKSTSLSDSISNSSSTEKSESLSTSTSDSLRTSTSLSDSLSMSTSGSLSKSQSLSTSISGSSSTSASLSDSTSNAISTSTSLSESASTSDSISISNSIANSQSASTSKSDSQSTSISLSTSDSKSMSTSESLSDSTSTSGSVSGSLSIAASQSVSTSTSDSMSTSEIVSDSISTSGSLSASDSKSMSVSSSMSTSQSGSTSESLSDSQSTSDSDSKSLSQSTSQSGSTSTSTSTSASVRTSESQSTSGSMSASQSDSMSISTSFSDSTSDSKSASTASSESISQSAFTSTSGSVSTSTSLSTSNSERTSTSMSDSTSLSTSESDSISESTSTSDSISEAISASESTFISLSESNSTSDSESQSASAFLSESLSESTSESTSESVSSSTSESTSLSDSTSESGSTSTSLSNSTSGSTSISTSTSISESTSTFKSESVSTSLSMSTSTSLSDSTSLSTSLSDSTSDSKSDSLSTSMSTSDSISTSKSDSISTSTSLSGSTSESESDSTSSSESKSDSTSMSISMSQSTSGSTSTSTSTSLSDSTSTSLSLSASMNQSGVDSNSASQSASNSTSTSTSESDSQSTSSYTSQSTSQSESTSTSTSLSDSTSISKSTSQSGSVSTSASLSGSESESDSQSISTSASESTSESASTSLSDSTSTSNSGSASTSTSLSNSASASESDLSSTSLSDSTSASMQSSESDSQSTSASLSDSLSTSTSNRMSTIASLSTSVSTSESGSTSESTSESDSTSTSLSDSQSTSRSTSASGSASTSTSTSDSRSTSASTSTSMRTSTSDSQSMSLSTSTSTSMSDSTSLSDSVSDSTSDSTSASTSGSMSVSISLSDSTSTSTSASEVMSASISDSQSMSESVNDSESVSESNSESDSKSMSGSTSVSDSGSLSVSTSLRKSESVSESSSLSCSQSMSDSVSTSDSSSLSVSTSLRSSESVSESDSLSDSKSTSGSTSTSTSGSLSTSTSLSGSESVSESTSLSDSISMSDSTSTSDSDSLSGSISLSGSTSLSTSDSLSDSKSLSSSQSMSGSESTSTSVSDSQSSSTSNSQFDSMSISASESDSMSTSDSSSISGSNSTSTSLSTSDSMSGSVSVSTSTSLSDSISGSTSVSDSSSTSTSTSLSDSMSQSQSTSTSASGSLSTSISTSMSMSASTSSSQSTSVSTSLSTSDSISDSTSISISGSQSTVESESTSDSTSISDSESLSTSDSDSTSTSTSDSTSGSTSTSISESLSTSGSGSTSVSDSTSMSESNSSSVSMSQDKSDSTSISDSESVSTSTSTSLSTSDSTSTSESLSTSMSGSQSISDSTSTSMSGSTSTSESNSMHPSDSMSMHHTHSTSTSRLSSEATTSTSESQSTLSATSEVTKHNGTPAQSEKRLPDTGDSIKQNGLLGGVMTLLVGLGLMKRKKKKDENDQDDSQA.

Positions 1–89 (MSKRQKAFHD…VNMLHDQQAF (89 aa)) are cleaved as a signal peptide. The segment at 90 to 230 (AASDAPLTSE…KTSTTSTSTA (141 aa)) is serine-rich repeat region 1, SRR1. Over residues 100–111 (LNTQSETVGNQN) the composition is skewed to polar residues. Disordered regions lie at residues 100–229 (LNTQ…STST), 751–791 (NSMS…VVST), and 806–2243 (SVSA…GLLG). The segment covering 112-128 (STTIEASTSTADSTSVT) has biased composition (low complexity). Over residues 129 to 140 (KNSSSVQTSNSD) the composition is skewed to polar residues. A compositionally biased stretch (low complexity) spans 150–229 (VTSTTNSTSN…NKTSTTSTST (80 aa)). A non-repeat region (NRR) region spans residues 231-751 (PVKLRTFSRL…TTFKYEVTRN (521 aa)). Low complexity-rich tracts occupy residues 752 to 791 (SMSDSVSTSGSTQQSQSVSTSKADSQSASTSTSGSIVVST), 806 to 1392 (SVSA…LSLS), and 1402 to 2214 (SNSA…ATSE). Positions 752-2232 (SMSDSVSTSG…AQSEKRLPDT (1481 aa)) are serine-rich repeat region 2, SRR2. An LPXTG sorting signal motif is present at residues 2229–2233 (LPDTG). At Thr2232 the chain carries Pentaglycyl murein peptidoglycan amidated threonine. Positions 2233–2271 (GDSIKQNGLLGGVMTLLVGLGLMKRKKKKDENDQDDSQA) are cleaved as a propeptide — removed by sortase.

It belongs to the serine-rich repeat protein (SRRP) family. Post-translationally, proteolytically cleaved by a metalloprotease. In terms of processing, glycosylated. It is probable that most of the Ser residues in SSR1 and SSR2 are O-GlcNAcylated. Sequential glycosylation by sugar transferases are able to generate complex sugar polymorphisms.

Its subcellular location is the secreted. The protein localises to the cell wall. In terms of biological role, mediates binding to human platelets, possibly through a receptor-ligand interaction. Probably associated with virulence in endovascular infection. The chain is Serine-rich adhesin for platelets (sraP) from Staphylococcus aureus (strain USA300).